The chain runs to 392 residues: Acyl-CoA dehydrogenase IpdE1 (392 aa).

Residues Q126–S129 and S171 contribute to the FAD site. The active-site Proton acceptor is E254. S371–E373 contacts FAD.

It belongs to the acyl-CoA dehydrogenase family. As to quaternary structure, heterotetramer composed of 2 IpdE1 subunits and 2 IpdE2 subunits. FAD is required as a cofactor.

It carries out the reaction 3-[(3aS,4S,5R,7aS)-5-hydroxy-7a-methyl-1-oxo-octahydro-1H-inden-4-yl]propanoyl-CoA + A = (2E)-3-[(3aS,4S,5R,7aS)-5-hydroxy-7a-methyl-1-oxo-octahydro-1H-inden-4-yl]prop-2-enoyl-CoA + AH2. The protein operates within steroid metabolism; cholesterol degradation. Involved in cholesterol degradation. Catalyzes the dehydrogenation of 5OH-HIP-CoA to 5OH-HIPE-CoA. In Mycolicibacterium smegmatis (strain ATCC 700084 / mc(2)155) (Mycobacterium smegmatis), this protein is Acyl-CoA dehydrogenase IpdE1.